Reading from the N-terminus, the 306-residue chain is Plant-type L-asparaginase (306 aa).

Thr176 (nucleophile) is an active-site residue. Residues 203-206 (RVGD) and 225-228 (TGLG) contribute to the substrate site.

It belongs to the Ntn-hydrolase family. As to quaternary structure, heterotetramer of two alpha and two beta chains arranged as a dimer of alpha/beta heterodimers. In terms of processing, autocleaved. Generates the alpha and beta subunits. The N-terminal residue of the beta subunit is thought to be responsible for the nucleophile hydrolase activity.

The catalysed reaction is L-asparagine + H2O = L-aspartate + NH4(+). Catalyzes the hydrolysis of L-asparagine into L-aspartate and ammonia. In Pyrococcus furiosus (strain ATCC 43587 / DSM 3638 / JCM 8422 / Vc1), this protein is Plant-type L-asparaginase.